The primary structure comprises 398 residues: Galactose-3-O-sulfotransferase 2 (398 aa).

Residues 1-11 (MLSALGGLQRC) lie on the Cytoplasmic side of the membrane. The helical; Signal-anchor for type II membrane protein transmembrane segment at 12-29 (FWAILLLALTVSLLAGFL) threads the bilayer. Over 30 to 398 (HKDVRLLMPL…PPKNIPFLGA (369 aa)) the chain is Lumenal. 6 N-linked (GlcNAc...) asparagine glycosylation sites follow: asparagine 77, asparagine 133, asparagine 180, asparagine 288, asparagine 330, and asparagine 360.

Belongs to the galactose-3-O-sulfotransferase family.

It is found in the golgi apparatus. The protein localises to the golgi stack membrane. Its pathway is protein modification; carbohydrate sulfation. With respect to regulation, strongly inhibited by Cu(2+) and Zn(2+). Transfers a sulfate group to the hydroxyl group at C3 of non-reducing beta-galactosyl residues. Acts both on type 1 (Gal-beta-1,3-GlcNAc) and type 2 (Gal-beta-1,4-GlcNAc) chains with similar efficiency. The polypeptide is Galactose-3-O-sulfotransferase 2 (GAL3ST2) (Sus scrofa (Pig)).